Here is a 112-residue protein sequence, read N- to C-terminus: DNA-directed RNA polymerase subunit Rpo11 (112 aa).

This sequence belongs to the archaeal Rpo11/eukaryotic RPB11/RPC19 RNA polymerase subunit family. In terms of assembly, part of the RNA polymerase complex.

Its subcellular location is the cytoplasm. It carries out the reaction RNA(n) + a ribonucleoside 5'-triphosphate = RNA(n+1) + diphosphate. In terms of biological role, DNA-dependent RNA polymerase (RNAP) catalyzes the transcription of DNA into RNA using the four ribonucleoside triphosphates as substrates. This Methanopyrus kandleri (strain AV19 / DSM 6324 / JCM 9639 / NBRC 100938) protein is DNA-directed RNA polymerase subunit Rpo11.